Consider the following 198-residue polypeptide: Glycerol-3-phosphate acyltransferase (198 aa).

Transmembrane regions (helical) follow at residues Leu10–Val30, Gly57–Leu77, Ile86–Phe106, Val118–Phe138, and Ala160–Ile180.

Belongs to the PlsY family. In terms of assembly, probably interacts with PlsX.

It is found in the cell inner membrane. The enzyme catalyses an acyl phosphate + sn-glycerol 3-phosphate = a 1-acyl-sn-glycero-3-phosphate + phosphate. It participates in lipid metabolism; phospholipid metabolism. Functionally, catalyzes the transfer of an acyl group from acyl-phosphate (acyl-PO(4)) to glycerol-3-phosphate (G3P) to form lysophosphatidic acid (LPA). This enzyme utilizes acyl-phosphate as fatty acyl donor, but not acyl-CoA or acyl-ACP. In Anaplasma marginale (strain Florida), this protein is Glycerol-3-phosphate acyltransferase.